Here is a 462-residue protein sequence, read N- to C-terminus: HEPACAM family member 2 (462 aa).

The N-terminal stretch at 1-31 is a signal peptide; it reads MGQDAFMEPFGDTLGVFQCKIYLLLFGACSG. N-linked (GlcNAc...) asparagine glycosylation is found at Asn-85, Asn-129, and Asn-165. Ig-like C2-type domains lie at 149-233 and 235-331; these read PVVQ…SDII and PIIY…THFT. Intrachain disulfides connect Cys-170-Cys-219 and Cys-270-Cys-315. N-linked (GlcNAc...) asparagine glycosylation is present at Asn-320. A helical membrane pass occupies residues 352–372; the sequence is LASITGISLFLIISMCLLFLW. Over 373–462 the chain is Cytoplasmic; that stretch reads KKYQPYKVIK…IPAQQQDHPE (90 aa).

In terms of processing, poly-ADP-ribosylated (PARsylated) by tankyrase TNKS during late G2 and prophase, leading to translocation to mitotic centrosomes. N-glycosylated. As to expression, widely expressed.

It localises to the golgi apparatus membrane. Its subcellular location is the cytoplasm. It is found in the cytoskeleton. The protein resides in the spindle. The protein localises to the microtubule organizing center. It localises to the centrosome. Its subcellular location is the midbody. Its function is as follows. Required during prometaphase for centrosome maturation. Following poly-ADP-ribosylation (PARsylation) by TNKS, translocates from the Golgi apparatus to mitotic centrosomes and plays a key role in the formation of robust microtubules for prompt movement of chromosomes: anchors AKAP9/CG-NAP, a scaffold protein of the gamma-tubulin ring complex and promotes centrosome maturation. This is HEPACAM family member 2 (HEPACAM2) from Homo sapiens (Human).